Consider the following 293-residue polypeptide: Ribosomal protein L11 methyltransferase (293 aa).

S-adenosyl-L-methionine-binding residues include Thr-145, Gly-166, Asp-188, and Asn-230.

The protein belongs to the methyltransferase superfamily. PrmA family.

The protein resides in the cytoplasm. It carries out the reaction L-lysyl-[protein] + 3 S-adenosyl-L-methionine = N(6),N(6),N(6)-trimethyl-L-lysyl-[protein] + 3 S-adenosyl-L-homocysteine + 3 H(+). Functionally, methylates ribosomal protein L11. The protein is Ribosomal protein L11 methyltransferase of Edwardsiella ictaluri (strain 93-146).